The primary structure comprises 118 residues: Large ribosomal subunit protein bL19 (118 aa).

Belongs to the bacterial ribosomal protein bL19 family.

Its function is as follows. This protein is located at the 30S-50S ribosomal subunit interface and may play a role in the structure and function of the aminoacyl-tRNA binding site. This chain is Large ribosomal subunit protein bL19, found in Salinibacter ruber (strain DSM 13855 / M31).